Consider the following 71-residue polypeptide: MPIIKVRDNEPFDVALRRFKRSCEKAGILADVRAREFYEKPTTARKRAKAAAIKRLAKKLSRENARRVRLY.

This sequence belongs to the bacterial ribosomal protein bS21 family.

This chain is Small ribosomal subunit protein bS21, found in Shewanella sediminis (strain HAW-EB3).